We begin with the raw amino-acid sequence, 70 residues long: Large ribosomal subunit protein bL31 (70 aa).

Zn(2+) is bound by residues C17, C19, C37, and C40.

Belongs to the bacterial ribosomal protein bL31 family. Type A subfamily. As to quaternary structure, part of the 50S ribosomal subunit. The cofactor is Zn(2+).

Functionally, binds the 23S rRNA. This chain is Large ribosomal subunit protein bL31, found in Clostridium kluyveri (strain NBRC 12016).